We begin with the raw amino-acid sequence, 828 residues long: Translation initiation factor IF-2 (828 aa).

Disordered regions lie at residues 48 to 76 and 112 to 148; these read SYSGSTTTLSLNKEKGSLETGSSSGSEEF and ASQEDPIEVEQEESSDTNKVKEEPKIEEVKDIEESTL. Residues 49–58 are compositionally biased toward polar residues; that stretch reads YSGSTTTLSL. Over residues 65-74 the composition is skewed to low complexity; sequence LETGSSSGSE. The segment covering 116 to 126 has biased composition (acidic residues); sequence DPIEVEQEESS. Positions 127–144 are enriched in basic and acidic residues; it reads DTNKVKEEPKIEEVKDIE. A tr-type G domain is found at 326-496; it reads SRAPVVTVMG…LLIAEMQNLK (171 aa). The G1 stretch occupies residues 335–342; that stretch reads GHVDHGKT. 335–342 contributes to the GTP binding site; that stretch reads GHVDHGKT. Residues 360 to 364 form a G2 region; that stretch reads GITQH. A G3 region spans residues 382-385; sequence DTPG. Residues 382-386 and 436-439 each bind GTP; these read DTPGH and NKID. Positions 436–439 are G4; the sequence is NKID. A G5 region spans residues 472–474; sequence SAL.

This sequence belongs to the TRAFAC class translation factor GTPase superfamily. Classic translation factor GTPase family. IF-2 subfamily.

It is found in the cytoplasm. Functionally, one of the essential components for the initiation of protein synthesis. Protects formylmethionyl-tRNA from spontaneous hydrolysis and promotes its binding to the 30S ribosomal subunits. Also involved in the hydrolysis of GTP during the formation of the 70S ribosomal complex. This chain is Translation initiation factor IF-2, found in Rickettsia bellii (strain OSU 85-389).